The following is a 278-amino-acid chain: Shikimate dehydrogenase (NADP(+)) (278 aa).

Residues 19–21 (SLS) and Thr66 each bind shikimate. Lys70 functions as the Proton acceptor in the catalytic mechanism. Shikimate is bound by residues Asn91 and Asp106. Residues 130–134 (GAGGS), 152–157 (NRTVEK), and Leu222 each bind NADP(+). Shikimate is bound at residue Tyr224. Residue Gly245 coordinates NADP(+).

It belongs to the shikimate dehydrogenase family. As to quaternary structure, homodimer.

The enzyme catalyses shikimate + NADP(+) = 3-dehydroshikimate + NADPH + H(+). It functions in the pathway metabolic intermediate biosynthesis; chorismate biosynthesis; chorismate from D-erythrose 4-phosphate and phosphoenolpyruvate: step 4/7. Functionally, involved in the biosynthesis of the chorismate, which leads to the biosynthesis of aromatic amino acids. Catalyzes the reversible NADPH linked reduction of 3-dehydroshikimate (DHSA) to yield shikimate (SA). This chain is Shikimate dehydrogenase (NADP(+)), found in Methanococcus aeolicus (strain ATCC BAA-1280 / DSM 17508 / OCM 812 / Nankai-3).